A 623-amino-acid chain; its full sequence is Hemagglutinin component HA-70 type D (623 aa).

As to quaternary structure, botulinum toxins are produced as large progenitor toxins of 12S (M toxin, about 280 kDa) and 16S (L toxin, about 650 kDa). M toxin consists of a non-toxic, non-hemagglutinin component (NTNHA) and the neurotoxin (BoNT/D). L toxin consists of the M toxin and the 3 hemagglutinin (HA) subcomponents of 70, 33, and 17 kDa. The stoichiometry of the whole complex has been modeled as one BoNT/D, one NTNHA, three HA-70, six HA-33 and three HA-17. HA-33 and HA-17 crystallize as a heterotrimer with two HA-33 and one HA-17. In terms of processing, limited treatment of L toxin with pepsin or trypsin produces shorter HA-70 proteins (called HA-55, HA-23 and HA-22) sometimes observed in vivo in other strains of type C and D botulinum toxin preparations.

The protein localises to the secreted. Its function is as follows. The hemagglutinin (HA) component of the progenitor toxin protects the structural integrity of the neurotoxin; may increase internalization of the neurotoxin into the bloodstream of the host. Involved in binding to the small intestine through interactions with glycolipids and glycoproteins containing sialic acid moieties. Erythrocyte agglutination only occurs when the entire complex is assembled. This HA subunit probably connects toxin/NTNHA to HA-33 and HA-17, the other components of the HA complex, and it may also protect the M toxin from proteolysis upon secretion. The chain is Hemagglutinin component HA-70 type D from Clostridium botulinum D phage (Clostridium botulinum D bacteriophage).